We begin with the raw amino-acid sequence, 277 residues long: Diaminopimelate epimerase (277 aa).

Asparagine 13, glutamine 46, and asparagine 66 together coordinate substrate. Catalysis depends on cysteine 75, which acts as the Proton donor. Residues 76 to 77 (GN), asparagine 159, asparagine 192, and 210 to 211 (ER) contribute to the substrate site. The active-site Proton acceptor is cysteine 219. 220–221 (GT) contributes to the substrate binding site.

The protein belongs to the diaminopimelate epimerase family. As to quaternary structure, homodimer.

The protein localises to the cytoplasm. The enzyme catalyses (2S,6S)-2,6-diaminopimelate = meso-2,6-diaminopimelate. It participates in amino-acid biosynthesis; L-lysine biosynthesis via DAP pathway; DL-2,6-diaminopimelate from LL-2,6-diaminopimelate: step 1/1. In terms of biological role, catalyzes the stereoinversion of LL-2,6-diaminopimelate (L,L-DAP) to meso-diaminopimelate (meso-DAP), a precursor of L-lysine and an essential component of the bacterial peptidoglycan. The sequence is that of Diaminopimelate epimerase from Aromatoleum aromaticum (strain DSM 19018 / LMG 30748 / EbN1) (Azoarcus sp. (strain EbN1)).